Consider the following 156-residue polypeptide: Arginine repressor (156 aa).

The protein belongs to the ArgR family.

Its subcellular location is the cytoplasm. It functions in the pathway amino-acid biosynthesis; L-arginine biosynthesis [regulation]. In terms of biological role, regulates arginine biosynthesis genes. In Shewanella oneidensis (strain ATCC 700550 / JCM 31522 / CIP 106686 / LMG 19005 / NCIMB 14063 / MR-1), this protein is Arginine repressor.